The chain runs to 726 residues: uncharacterized protein (726 aa).

Residues Ser583 and His698 each act as charge relay system in the active site.

The protein belongs to the peptidase S9B family.

This is an uncharacterized protein from Sinorhizobium fredii (strain NBRC 101917 / NGR234).